Here is a 289-residue protein sequence, read N- to C-terminus: BTB/POZ domain-containing protein KCTD7 (289 aa).

The tract at residues 1–35 is disordered; the sequence is MVVVTGREPDSRRQDGAMSSSDAEDDFLEPATPTA. Positions 51–149 constitute a BTB domain; the sequence is EVVPLNIGGA…QLENMQPLKG (99 aa).

Interacts with CUL3.

The protein resides in the cell membrane. It is found in the cytoplasm. The protein localises to the cytosol. Its function is as follows. May be involved in the control of excitability of cortical neurons. The polypeptide is BTB/POZ domain-containing protein KCTD7 (KCTD7) (Homo sapiens (Human)).